Reading from the N-terminus, the 70-residue chain is MLNPSIDSLLKKIDSKYTLVTVAAKRAREMQLADDCAVEKPVSHKFVGKALEEIDAELLNYVPSEEKVSE.

This sequence belongs to the RNA polymerase subunit omega family. The RNAP catalytic core consists of 2 alpha, 1 beta, 1 beta' and 1 omega subunit. When a sigma factor is associated with the core the holoenzyme is formed, which can initiate transcription.

It carries out the reaction RNA(n) + a ribonucleoside 5'-triphosphate = RNA(n+1) + diphosphate. Promotes RNA polymerase assembly. Latches the N- and C-terminal regions of the beta' subunit thereby facilitating its interaction with the beta and alpha subunits. The polypeptide is DNA-directed RNA polymerase subunit omega (Bacillus cytotoxicus (strain DSM 22905 / CIP 110041 / 391-98 / NVH 391-98)).